The primary structure comprises 545 residues: Chaperonin GroEL 1 (545 aa).

ATP contacts are provided by residues 30–33 (TLGP), Lys51, 87–91 (DGTTT), Gly415, and Asp496.

Belongs to the chaperonin (HSP60) family. As to quaternary structure, forms a cylinder of 14 subunits composed of two heptameric rings stacked back-to-back. Interacts with the co-chaperonin GroES.

It localises to the cytoplasm. It carries out the reaction ATP + H2O + a folded polypeptide = ADP + phosphate + an unfolded polypeptide.. In terms of biological role, together with its co-chaperonin GroES, plays an essential role in assisting protein folding. The GroEL-GroES system forms a nano-cage that allows encapsulation of the non-native substrate proteins and provides a physical environment optimized to promote and accelerate protein folding. The polypeptide is Chaperonin GroEL 1 (Nitrobacter hamburgensis (strain DSM 10229 / NCIMB 13809 / X14)).